Here is a 664-residue protein sequence, read N- to C-terminus: MSWKRYLKWVSFAIIPLLFANTSIKSKLIDTNLYLVKDDFQSQNQLTIATNQLAKIIVNQIEFDSNSLIANPTTVLNKELIGSKITPKLKFSDQFSNAIEMVSKLNQEFDQLANKDKTFFQFALDLLEKQEESKFDFEPKDERIDAIFFLSNLININPKQEKTLNFIRILPNLIKSIFKDTTITINIKIGGKNKVITFIENGSNVFLLSDVENFLNADQTGINFYEIEFLTFDFIVVNKTGWTLKNQPVDSFFKSVKNLPSIQKTKNGFQYSLKFRSEYNEHHILKDHFLIPIVTNQKNFSVNDIEKNGLNSYQREQITYAIKNSFTSQKENNLNISSATIKYIKDPEKLIKKSLIKPSVKNGIFYVSAQIINSNDLTKWGSKNDSEIIKDKMYFLEQNKNFPAIRTYLFQMRTKKLVLNVNDIWFKSSGDKLRVIVNNVEIDEFNPKENNTSFFESYEVHINDYFSLANKELLIKKLNLALSEMNLLIDKKKSSLDLFPKEIKLTTLKINSSLHFYLNVDAIKNQLNIEVNISKNRLTSLVYDIAIKNENELQIRTTNNYLNKYIWFDLDKKNNQKLKNELKLFLSLKKFQFKKEPNFSLKKNSYSFQIDKIIQSNSEDKKTDIIVYLIIGFSVLVLFITVFIYFHKWNKKQKMIKNKTRDNF.

Positions 1–25 (MSWKRYLKWVSFAIIPLLFANTSIK) are cleaved as a signal peptide. A helical transmembrane segment spans residues 625-645 (IIVYLIIGFSVLVLFITVFIY).

Belongs to the MG414/MG415 family.

It is found in the cell membrane. This is an uncharacterized protein from Mycoplasma genitalium (strain ATCC 33530 / DSM 19775 / NCTC 10195 / G37) (Mycoplasmoides genitalium).